The following is a 215-amino-acid chain: Ectodysplasin-A receptor-associated adapter protein (215 aa).

Disordered regions lie at residues Met-1 to Ser-41 and Leu-62 to Pro-86. Positions Gly-17–Val-28 are enriched in basic and acidic residues. Residues Asp-123–Glu-202 enclose the Death domain.

Self-associates and binds EDAR, TRAF1, TRAF2 and TRAF3. Detected in adult pancreas, placenta and fetal skin, and at lower levels in lung, thymus, prostate and testis.

The protein resides in the cytoplasm. Its function is as follows. Adapter protein that interacts with EDAR DEATH domain and couples the receptor to EDA signaling pathway during morphogenesis of ectodermal organs. Mediates the activation of NF-kappa-B. This chain is Ectodysplasin-A receptor-associated adapter protein (EDARADD), found in Homo sapiens (Human).